Reading from the N-terminus, the 594-residue chain is UvrABC system protein C (594 aa).

The GIY-YIG domain maps to 17–94 (LEPGCYLMKD…IKQYQPRYNI (78 aa)). One can recognise a UVR domain in the interval 199-234 (KTILHHLEDRMNKASEQLDFEQAKEYRDMIQHIHNL).

The protein belongs to the UvrC family. Interacts with UvrB in an incision complex.

The protein resides in the cytoplasm. Functionally, the UvrABC repair system catalyzes the recognition and processing of DNA lesions. UvrC both incises the 5' and 3' sides of the lesion. The N-terminal half is responsible for the 3' incision and the C-terminal half is responsible for the 5' incision. This is UvrABC system protein C from Staphylococcus epidermidis (strain ATCC 12228 / FDA PCI 1200).